Reading from the N-terminus, the 80-residue chain is MKLSAVLLAIALLALSLVQCLGLPDPSTKCVMECDTQEYRSICAADDKGSTKTYRNLCVMKTENCLQNANFQKISDKECP.

The signal sequence occupies residues 1–22; the sequence is MKLSAVLLAIALLALSLVQCLG. In terms of domain architecture, Kazal-like spans 24–80; it reads PDPSTKCVMECDTQEYRSICAADDKGSTKTYRNLCVMKTENCLQNANFQKISDKECP. Cystine bridges form between C30-C65, C34-C58, and C43-C79.

Interacts with wg; the interaction facilitates short-range diffusion of wg. As to expression, strongly expressed in the developing fly wing but is excluded from the presumptive wing margin.

It is found in the secreted. Increases short-range diffusion of the wingless/wg protein, enhancing its signaling and expression of target genes required for wing margin morphogenesis. May act as a serine protease inhibitor since it possess the Kazal serine protease inhibitor signature. This chain is Protein pegasus, found in Drosophila melanogaster (Fruit fly).